The sequence spans 98 residues: NADH-ubiquinone oxidoreductase chain 4L (98 aa).

3 helical membrane passes run 1-21 (MPVI…GLLI), 29-49 (SLLC…TLAL), and 61-81 (IILL…LVMV).

The protein belongs to the complex I subunit 4L family. Core subunit of respiratory chain NADH dehydrogenase (Complex I) which is composed of 45 different subunits.

Its subcellular location is the mitochondrion inner membrane. The catalysed reaction is a ubiquinone + NADH + 5 H(+)(in) = a ubiquinol + NAD(+) + 4 H(+)(out). Functionally, core subunit of the mitochondrial membrane respiratory chain NADH dehydrogenase (Complex I) which catalyzes electron transfer from NADH through the respiratory chain, using ubiquinone as an electron acceptor. Part of the enzyme membrane arm which is embedded in the lipid bilayer and involved in proton translocation. This Echinops telfairi (Lesser hedgehog tenrec) protein is NADH-ubiquinone oxidoreductase chain 4L (MT-ND4L).